A 200-amino-acid polypeptide reads, in one-letter code: uncharacterized protein (200 aa).

Low complexity-rich tracts occupy residues 1 to 13 (MTSA…AAES) and 28 to 44 (PSPA…AGPR). Disordered stretches follow at residues 1–116 (MTSA…GGPG) and 137–200 (LPRD…SSFF). The segment covering 88 to 102 (RCGRPRRRDPRRRRT) has biased composition (basic residues). Residues 189–200 (PSSSSGLLSSFF) are compositionally biased toward low complexity.

This is an uncharacterized protein from Homo sapiens (Human).